The primary structure comprises 690 residues: Probable serine/threonine-protein kinase drkB (690 aa).

A signal peptide spans M1 to S24. The interval D51–P110 is disordered. The segment covering H57–D96 has biased composition (low complexity). Residues A97–P107 are compositionally biased toward polar residues. N-linked (GlcNAc...) asparagine glycosylation is found at N134, N180, N220, and N250. Positions T287–S335 are disordered. Low complexity predominate over residues P296–S323. The chain crosses the membrane as a helical span at residues I346–I366. One can recognise a Protein kinase domain in the interval I391–I644. ATP contacts are provided by residues I397–V405 and K418. Residue D514 is the Proton acceptor of the active site. The segment at F649–N690 is disordered. The segment covering N655–D681 has biased composition (low complexity).

The protein belongs to the protein kinase superfamily. TKL Ser/Thr protein kinase family.

The protein resides in the membrane. It catalyses the reaction L-seryl-[protein] + ATP = O-phospho-L-seryl-[protein] + ADP + H(+). The catalysed reaction is L-threonyl-[protein] + ATP = O-phospho-L-threonyl-[protein] + ADP + H(+). The polypeptide is Probable serine/threonine-protein kinase drkB (drkB) (Dictyostelium discoideum (Social amoeba)).